Consider the following 731-residue polypeptide: Vezatin (731 aa).

Transmembrane regions (helical) follow at residues 91–111 (LATP…LLVM) and 114–134 (TWWI…YLVI). A coiled-coil region spans residues 382–414 (VRSLQLHLKALLNEVIILEDELEKLVCTKETQE). Disordered regions lie at residues 570 to 671 (PVDP…DSLQ) and 710 to 731 (QTFG…IEEK). Polar residues predominate over residues 577–586 (ISNSEPSMNS). The span at 590 to 601 (KVSKNDTEEESS) shows a compositional bias: basic and acidic residues. The span at 658-671 (GLTTAPPTPRDSLQ) shows a compositional bias: polar residues. Acidic residues predominate over residues 712–721 (FGDEEEEQII). Basic and acidic residues predominate over residues 722–731 (EENKNKIEEK).

The protein belongs to the vezatin family. Interacts with USH2A (via the cytoplasmic region); the interaction associates VEZT with the USH2 complex at the stereocilia base. Interacts with myosin MYO7A and the cadherin-catenins complex.

The protein resides in the cell membrane. The protein localises to the cell projection. It is found in the stereocilium membrane. It localises to the cell junction. Its subcellular location is the adherens junction. The protein resides in the nucleus. The protein localises to the cytoplasmic vesicle. It is found in the secretory vesicle. It localises to the acrosome. Its function is as follows. Plays a pivotal role in the establishment of adherens junctions and their maintenance in adult life. Required for morphogenesis of the preimplantation embryo, and for the implantation process. This is Vezatin (VEZT) from Pongo abelii (Sumatran orangutan).